We begin with the raw amino-acid sequence, 926 residues long: UvrABC system protein A (926 aa).

Residue 31–38 (GPSGSGKS) coordinates ATP. Residues 251 to 278 (CPEHGFSIPELSARLFSFNSPYGACPSC) form a C4-type zinc finger. ABC transporter domains are found at residues 308–568 (SGYF…PSSL) and 588–916 (PSGK…KYLR). 620–627 (GVSGSGKS) lines the ATP pocket. The C4-type zinc-finger motif lies at 719-745 (CEACQGEGVIKVEMHFLPPVYVTCEVC).

This sequence belongs to the ABC transporter superfamily. UvrA family. Forms a heterotetramer with UvrB during the search for lesions.

The protein resides in the cytoplasm. Functionally, the UvrABC repair system catalyzes the recognition and processing of DNA lesions. UvrA is an ATPase and a DNA-binding protein. A damage recognition complex composed of 2 UvrA and 2 UvrB subunits scans DNA for abnormalities. When the presence of a lesion has been verified by UvrB, the UvrA molecules dissociate. The sequence is that of UvrABC system protein A from Aquifex aeolicus (strain VF5).